A 160-amino-acid chain; its full sequence is Phosphopantetheine adenylyltransferase (160 aa).

Thr10 is a binding site for substrate. Residues 10–11 (TF) and His18 each bind ATP. 3 residues coordinate substrate: Lys42, Met74, and Arg88. Residues 89–91 (GLR), Glu99, and 124–130 (LSFLSSS) contribute to the ATP site.

It belongs to the bacterial CoaD family. As to quaternary structure, homohexamer. The cofactor is Mg(2+).

Its subcellular location is the cytoplasm. It catalyses the reaction (R)-4'-phosphopantetheine + ATP + H(+) = 3'-dephospho-CoA + diphosphate. Its pathway is cofactor biosynthesis; coenzyme A biosynthesis; CoA from (R)-pantothenate: step 4/5. Functionally, reversibly transfers an adenylyl group from ATP to 4'-phosphopantetheine, yielding dephospho-CoA (dPCoA) and pyrophosphate. The polypeptide is Phosphopantetheine adenylyltransferase (Photorhabdus laumondii subsp. laumondii (strain DSM 15139 / CIP 105565 / TT01) (Photorhabdus luminescens subsp. laumondii)).